A 149-amino-acid chain; its full sequence is Calmodulin (149 aa).

Residue Ala-2 is modified to N-acetylalanine. EF-hand domains lie at 8–43 (EQIA…LGQN), 44–79 (PTEA…KMKD), 81–116 (DSEE…LGEK), and 117–149 (LTDE…MTAK). The Ca(2+) site is built by Asp-21, Asp-23, Asp-25, Thr-27, Glu-32, Asp-59, Asn-61, Thr-63, Glu-68, Asp-94, Asp-96, Asn-98, Tyr-100, and Glu-105. Residue Lys-116 is modified to N6,N6,N6-trimethyllysine. Positions 130, 132, 134, 136, and 141 each coordinate Ca(2+).

It belongs to the calmodulin family.

Calmodulin acts as part of a calcium signal transduction pathway by mediating the control of a large number of enzymes, ion channels, aquaporins and other proteins through calcium-binding. Calcium-binding is required for the activation of calmodulin. Among the enzymes to be stimulated by the calmodulin-calcium complex are a number of protein kinases, such as myosin light-chain kinases and calmodulin-dependent protein kinase type II (CaMK2), and phosphatases. This chain is Calmodulin, found in Myxine glutinosa (Atlantic hagfish).